Reading from the N-terminus, the 44-residue chain is U17-ctenitoxin-Co1a (44 aa).

4 cysteine pairs are disulfide-bonded: Cys3/Cys20, Cys10/Cys26, Cys19/Cys40, and Cys28/Cys38.

As to expression, expressed by the venom gland.

It localises to the secreted. In terms of biological role, omega-agatoxins are antagonists of voltage-sensitive calcium channels (Cav). Toxic to mice by intracerebroventricular injection. This is U17-ctenitoxin-Co1a from Ctenus ornatus (Brazilian spider).